Consider the following 272-residue polypeptide: Protein STAY-GREEN 1, chloroplastic (272 aa).

A chloroplast-targeting transit peptide spans 1-50 (MGTLTTSLVVPSKLNNEQQSSIFIHKTRRKCKKNQSIVPVARLFGPAIFE). The interval 201-222 (TSPSSSSGGVGGVKSTSFTSNS) is disordered.

The protein belongs to the staygreen family. Interacts with PSY1.

Its subcellular location is the plastid. It is found in the chloroplast. Its function is as follows. Required to trigger chlorophyll degradation during leaf senescence and fruit ripening. Binds directly PSY1 to regulate the accumulation of lycopene and beta-carotene in the maturing fruits. The chain is Protein STAY-GREEN 1, chloroplastic from Solanum lycopersicum (Tomato).